Consider the following 507-residue polypeptide: ATP synthase subunit alpha, chloroplastic (507 aa).

Gly-170 to Thr-177 contacts ATP.

The protein belongs to the ATPase alpha/beta chains family. F-type ATPases have 2 components, CF(1) - the catalytic core - and CF(0) - the membrane proton channel. CF(1) has five subunits: alpha(3), beta(3), gamma(1), delta(1), epsilon(1). CF(0) has four main subunits: a, b, b' and c.

The protein localises to the plastid. Its subcellular location is the chloroplast thylakoid membrane. The enzyme catalyses ATP + H2O + 4 H(+)(in) = ADP + phosphate + 5 H(+)(out). Produces ATP from ADP in the presence of a proton gradient across the membrane. The alpha chain is a regulatory subunit. The chain is ATP synthase subunit alpha, chloroplastic from Gossypium hirsutum (Upland cotton).